The sequence spans 256 residues: MSRKKTPKSKAGSAPATSALPAANGPRPVRPGTARPGPEAPPNGPPQPGRSSVGGGGDFYDVAFKVMLVGDSGVGKTCLLVRFKDGAFLAGTFISTVGIDFRNKVVDVDGMKVKLQIWDTAGQERFRSVTHAYYRDAHALLLLYDVTNKASFDSIQAWLTEIQEHAQDDVVLMLLGNKVDSAQERAVKREDAEKLAKDYGLPFMETSAKTGLNVDLAFTAIAKELKQRHTKAPSEPRFQLHDYIKREGRGASCCRP.

Residues 1–53 (MSRKKTPKSKAGSAPATSALPAANGPRPVRPGTARPGPEAPPNGPPQPGRSSV) are disordered. A compositionally biased stretch (pro residues) spans 38 to 48 (PEAPPNGPPQP). GTP is bound by residues serine 72, glycine 73, valine 74, glycine 75, lysine 76, threonine 77, cysteine 78, serine 95, and threonine 96. Threonine 77 is a binding site for Mg(2+). Short sequence motifs (switch) lie at residues 86–101 (GAFL…GIDF) and 119–136 (DTAG…YYRD). 2 residues coordinate Mg(2+): threonine 96 and aspartate 119. GTP contacts are provided by glycine 122, asparagine 177, lysine 178, aspartate 180, alanine 208, and lysine 209. 2 S-geranylgeranyl cysteine lipidation sites follow: cysteine 253 and cysteine 254.

Belongs to the small GTPase superfamily. Rab family. Mg(2+) is required as a cofactor.

It localises to the cell membrane. It carries out the reaction GTP + H2O = GDP + phosphate + H(+). Its activity is regulated as follows. Regulated by guanine nucleotide exchange factors (GEFs) which promote the exchange of bound GDP for free GTP. Regulated by GTPase activating proteins (GAPs) which increase the GTP hydrolysis activity. Inhibited by GDP dissociation inhibitors (GDIs). The small GTPases Rab are key regulators of intracellular membrane trafficking, from the formation of transport vesicles to their fusion with membranes. Rabs cycle between an inactive GDP-bound form and an active GTP-bound form that is able to recruit to membranes different set of downstream effectors directly responsible for vesicle formation, movement, tethering and fusion. RAB26 mediates transport of ADRA2A and ADRA2B from the Golgi to the cell membrane. Plays a role in the maturation of zymogenic granules and in pepsinogen secretion in the stomach. Plays a role in the secretion of amylase from acinar granules in the parotid gland. The protein is Ras-related protein Rab-26 (RAB26) of Bos taurus (Bovine).